The sequence spans 523 residues: 2-isopropylmalate synthase (523 aa).

A Pyruvate carboxyltransferase domain is found at 5-267; that stretch reads VIIFDTTLRD…HTRINHQEIW (263 aa). Residues Asp-14, His-202, His-204, and Asn-238 each coordinate Mn(2+). Positions 392–523 are regulatory domain; sequence RLDYFSVQSG…QNKENNKETV (132 aa).

It belongs to the alpha-IPM synthase/homocitrate synthase family. LeuA type 1 subfamily. In terms of assembly, homodimer. It depends on Mn(2+) as a cofactor.

Its subcellular location is the cytoplasm. It carries out the reaction 3-methyl-2-oxobutanoate + acetyl-CoA + H2O = (2S)-2-isopropylmalate + CoA + H(+). It participates in amino-acid biosynthesis; L-leucine biosynthesis; L-leucine from 3-methyl-2-oxobutanoate: step 1/4. Catalyzes the condensation of the acetyl group of acetyl-CoA with 3-methyl-2-oxobutanoate (2-ketoisovalerate) to form 3-carboxy-3-hydroxy-4-methylpentanoate (2-isopropylmalate). This Citrobacter koseri (strain ATCC BAA-895 / CDC 4225-83 / SGSC4696) protein is 2-isopropylmalate synthase.